A 437-amino-acid chain; its full sequence is RING finger protein 150 (437 aa).

The first 34 residues, 1-34 (MTMSLIQACRSLALSTWLLSFCFVHLLCLDFTVA), serve as a signal peptide directing secretion. Residues 35 to 207 (EKEEWYTAFV…NLQKYVSRTS (173 aa)) lie on the Extracellular side of the membrane. N-linked (GlcNAc...) asparagine glycans are attached at residues asparagine 45, asparagine 124, asparagine 152, and asparagine 185. The PA domain maps to 80–182 (SPKQDARGEV…PKGKEIVSLL (103 aa)). The chain crosses the membrane as a helical span at residues 208-228 (VVFVSISFIVLMIISLAWLVF). Over 229-437 (YYIQRFRYAN…TDQDCEEVKS (209 aa)) the chain is Cytoplasmic. The RING-type; atypical zinc finger occupies 277-318 (CAVCIEGYKPNDVVRILPCRHLFHKSCVDPWLLDHRTCPMCK).

It is found in the membrane. In Mus musculus (Mouse), this protein is RING finger protein 150 (Rnf150).